The chain runs to 298 residues: Inosose dehydratase (298 aa).

The protein belongs to the IolE/MocC family. Glutathione serves as cofactor. It depends on Co(2+) as a cofactor. Mn(2+) is required as a cofactor.

It catalyses the reaction scyllo-inosose = 3D-3,5/4-trihydroxycyclohexane-1,2-dione + H2O. Functionally, catalyzes the dehydration of inosose (2-keto-myo-inositol, 2KMI or 2,4,6/3,5-pentahydroxycyclohexanone) to 3D-(3,5/4)-trihydroxycyclohexane-1,2-dione (D-2,3-diketo-4-deoxy-epi-inositol). This chain is Inosose dehydratase, found in Glaesserella parasuis serovar 5 (strain SH0165) (Haemophilus parasuis).